We begin with the raw amino-acid sequence, 352 residues long: Uroporphyrinogen decarboxylase (352 aa).

Residues 26–30, phenylalanine 45, aspartate 76, tyrosine 153, serine 208, and histidine 323 contribute to the substrate site; that span reads RQAGR.

Belongs to the uroporphyrinogen decarboxylase family. As to quaternary structure, homodimer.

The protein resides in the cytoplasm. The enzyme catalyses uroporphyrinogen III + 4 H(+) = coproporphyrinogen III + 4 CO2. It participates in porphyrin-containing compound metabolism; protoporphyrin-IX biosynthesis; coproporphyrinogen-III from 5-aminolevulinate: step 4/4. In terms of biological role, catalyzes the decarboxylation of four acetate groups of uroporphyrinogen-III to yield coproporphyrinogen-III. The sequence is that of Uroporphyrinogen decarboxylase from Prochlorococcus marinus (strain MIT 9313).